We begin with the raw amino-acid sequence, 152 residues long: Large ribosomal subunit protein bL9 (152 aa).

This sequence belongs to the bacterial ribosomal protein bL9 family.

In terms of biological role, binds to the 23S rRNA. The protein is Large ribosomal subunit protein bL9 of Streptococcus thermophilus (strain CNRZ 1066).